The following is a 476-amino-acid chain: Angiotensinogen (476 aa).

The first 24 residues, 1–24 (MAPAGLSLGAAILCLLAWAGLAAG), serve as a signal peptide directing secretion. C42 and C161 are disulfide-bonded. N295, N319, N362, and N401 each carry an N-linked (GlcNAc...) asparagine glycan.

This sequence belongs to the serpin family. Post-translationally, in response to low blood pressure, the enzyme renin/REN cleaves angiotensinogen to produce angiotensin-1. Angiotensin-1 is a substrate of ACE (angiotensin converting enzyme) that removes a dipeptide to yield the physiologically active peptide angiotensin-2. Angiotensin-1 and angiotensin-2 can be further processed to generate angiotensin-3, angiotensin-4. Angiotensin 1-9 is cleaved from angiotensin-1 by ACE2 and can be further processed by ACE to produce angiotensin 1-7, angiotensin 1-5 and angiotensin 1-4. Angiotensin 1-7 has also been proposed to be cleaved from angiotensin-2 by ACE2 or from angiotensin-1 by MME (neprilysin). In terms of processing, the disulfide bond is labile. Angiotensinogen is present in the circulation in a near 40:60 ratio with the oxidized disulfide-bonded form, which preferentially interacts with receptor-bound renin.

The protein resides in the secreted. Its function is as follows. Essential component of the renin-angiotensin system (RAS), a potent regulator of blood pressure, body fluid and electrolyte homeostasis. Functionally, acts directly on vascular smooth muscle as a potent vasoconstrictor, affects cardiac contractility and heart rate through its action on the sympathetic nervous system, and alters renal sodium and water absorption through its ability to stimulate the zona glomerulosa cells of the adrenal cortex to synthesize and secrete aldosterone. Acts by binding to angiotensin receptors AGTR1 and AGTR2. Also binds the DEAR/FBXW7-AS1 receptor. Stimulates aldosterone release. In terms of biological role, is a ligand for the G-protein coupled receptor MAS1. Has vasodilator and antidiuretic effects. Has an antithrombotic effect that involves MAS1-mediated release of nitric oxide from platelets. The polypeptide is Angiotensinogen (AGT) (Bos taurus (Bovine)).